The following is a 570-amino-acid chain: MSIVGLVSVVCPSGGIKKRYFSKGLDNFQGFRSSECLGIQLQVPVPFYSGIRQSPRATSLQVVCKDCPRPELEGAVNFLEAAQLSASFRSSPRPEKGLEVVVVGAGLAGLSTAKYLADAGHKPILLESRDVLGGKIAAWKDKDGDWYETGLHIFFGAYPNVQNLFGELGINDRLQWKEHSMIFAMPNKPGEFSRFDFPEVLPAPLNGIWAILRNNEMLTWPEKVRFAIGLLPAMVGGQAYVEAQDGLTVTEWMRRQGVPDRVNDEVFIAMSKALNFINPDELSMQCILIALNRFLQEKHGSKMAFLDGNPPERLCMPIVDHIQSLGGRAQLNSRLQKIELNPDGTVKHFVLGNGNIITGDAYVVAAPVDILKLLLPQEWREIPYFQKLDKLVGVPVINVHIWFDRKLKNTYDHLLFTRSPLLSVYADMSVTCKEYYDPNRSMLELVFAPAEEWISRSDSEIIERTMKELAKLFPDEIAADQSKAKILKYHVVKTPRSVYKTIPDCEPCRPLQRSPIEGFYLAGDYTNQKYLASMEGAVLSGKLCAQSIVQDYELLVRRSKKASTAEMTVV.

The N-terminal 91 residues, 1 to 91 (MSIVGLVSVV…AQLSASFRSS (91 aa)), are a transit peptide targeting the chloroplast and chromoplast. FAD-binding positions include 104-120 (GAGL…ADAG), alanine 108, 127-128 (ES), lysine 135, 152-153 (HI), and tyrosine 158. Arginine 293 serves as a coordination point for substrate. Aspartate 524 is a binding site for FAD. Alanine 532 is a substrate binding site. Methionine 534 is a binding site for FAD.

It belongs to the carotenoid/retinoid oxidoreductase family. In terms of assembly, homotetramer. The cofactor is FAD. In terms of tissue distribution, expressed more strongly in flowers than in leaves.

The protein resides in the plastid. The protein localises to the chloroplast. It localises to the chromoplast. It is found in the membrane. The catalysed reaction is 2 a plastoquinone + 15-cis-phytoene = 9,9',15-tri-cis-zeta-carotene + 2 a plastoquinol. It functions in the pathway carotenoid biosynthesis; lycopene biosynthesis. Functionally, converts phytoene into zeta-carotene via the intermediary of phytofluene by the symmetrical introduction of two double bonds at the C-11 and C-11' positions of phytoene with a concomitant isomerization of two neighboring double bonds at the C9 and C9' positions from trans to cis. In Narcissus pseudonarcissus (Daffodil), this protein is 15-cis-phytoene desaturase, chloroplastic/chromoplastic (PDS1).